A 521-amino-acid polypeptide reads, in one-letter code: Chromaffin granule amine transporter (521 aa).

Over 1–21 (MLQVVLGAPQRLLKEGRQSRK) the chain is Cytoplasmic. The chain crosses the membrane as a helical span at residues 22-42 (LVLVVVFVALLLDNMLLTVVV). Residues 43–135 (PIVPTFLYAT…IEFLEEENVR (93 aa)) lie on the Lumenal, vesicle side of the membrane. N-linked (GlcNAc...) asparagine glycans are attached at residues N58, N87, and N104. The helical transmembrane segment at 136 to 155 (IGILFASKALMQLLVNPFVG) threads the bilayer. Over 156 to 164 (PLTNRIGYH) the chain is Cytoplasmic. Residues 165-185 (IPMFVGFMIMFLSTLMFAFSG) traverse the membrane as a helical segment. The Lumenal, vesicle portion of the chain corresponds to 186 to 194 (TYALLFVAR). Residues 195-215 (TLQGIGSSFSSVAGLGMLASV) traverse the membrane as a helical segment. At 216 to 224 (YTDNYERGR) the chain is on the cytoplasmic side. Residues 225-247 (AMGIALGGLALGLLVGAPFGSVM) form a helical membrane-spanning segment. Over 248–253 (YEFVGK) the chain is Lumenal, vesicle. Residues 254–276 (SSPFLILAFLALLDGALQLCILW) traverse the membrane as a helical segment. Topologically, residues 277 to 296 (PSKVSPESAMGTSLLTLLKD) are cytoplasmic. A helical membrane pass occupies residues 297-316 (PYILVAAGSICLANMGVAIL). Topologically, residues 317 to 332 (EPTLPIWMMQTMCSPE) are lumenal, vesicle. A helical transmembrane segment spans residues 333–357 (WQLGLAFLPASVAYLIGTNLFGVLA). Topologically, residues 358-362 (NKMGR) are cytoplasmic. A helical membrane pass occupies residues 363-383 (WLCSLVGMVAVGISLLCVPLA). The Lumenal, vesicle portion of the chain corresponds to 384–394 (HNIFGLIGPNA). The helical transmembrane segment at 395 to 415 (GLGFAIGMVDSSLMPIMGYLV) threads the bilayer. Residues 416-419 (DLRH) lie on the Cytoplasmic side of the membrane. A helical transmembrane segment spans residues 420–440 (TSVYGSVYAIADVAFCVGFAI). Over 441–445 (GPSTG) the chain is Lumenal, vesicle. The helical transmembrane segment at 446-467 (GVIVQVIGFPWLMVIIGTINII) threads the bilayer. Residues 468–521 (YAPLCCFLQNPPAKEEKRAILSQECPTETQMYTFQKPTKAFPLGENSDDPSSGE) are Cytoplasmic-facing.

The protein belongs to the major facilitator superfamily. Vesicular transporter family. Adrenal gland.

It localises to the cytoplasmic vesicle. The protein localises to the secretory vesicle membrane. It is found in the secretory vesicle. Its subcellular location is the synaptic vesicle membrane. The enzyme catalyses serotonin(in) + 2 H(+)(out) = serotonin(out) + 2 H(+)(in). It carries out the reaction (R)-noradrenaline(in) + 2 H(+)(out) = (R)-noradrenaline(out) + 2 H(+)(in). It catalyses the reaction dopamine(in) + 2 H(+)(out) = dopamine(out) + 2 H(+)(in). Its activity is regulated as follows. Strongly inhibited by reserpine, ketanserin and methamphetamine. Also inhibited weakly by tetrabenazine. Functionally, electrogenic antiporter that exchanges one cationic monoamine with two intravesicular protons across the membrane of secretory and synaptic vesicles. Uses the electrochemical proton gradient established by the V-type proton-pump ATPase to accumulate high concentrations of monoamines inside the vesicles prior to their release via exocytosis. Transports catecholamines and indolamines with higher affinity for serotonin. Regulates the transvesicular monoaminergic gradient that determines the quantal size. Mediates presynaptic monoaminergic vesicle transport in the amygdala and prefrontal brain regions related with emotion processing in response to environmental stimuli. This is Chromaffin granule amine transporter (Slc18a1) from Rattus norvegicus (Rat).